The primary structure comprises 301 residues: MRGLSAVVRVLCVAALAVGVFAAAVLLAGTAGNAKAAGYESLMVPSNAMGRDIPVAFMAGGPHAVYLLDAFNAALDVSNWVTAGNAMTTLGGRGISVVAPAGGAYSMYTNWENDGSKQWDTFLSSELPDWLATKRGLAPDGHAAVGASQGGYAALALAAFHPDRFGFAGSLSGFVYPSSTNYNGAILAGLQQFGGIDGNGMWGAPQLGRWKWHDPYVHASLLAQNNTRVWVYSPMTMGGDIDAMIGQAVASMGSSREFYQQYRSVGGHNGHFDFSGGGDNGWGAWAPQLAAMSGDIVGAIR.

The N-terminal stretch at 1–36 is a signal peptide; the sequence is MRGLSAVVRVLCVAALAVGVFAAAVLLAGTAGNAKA.

The protein belongs to the mycobacterial A85 antigen family. As to quaternary structure, homodimer.

It localises to the secreted. Functionally, may have a role in host tissue attachment, whereby ligands may include the serum protein fibronectin and small sugars. The polypeptide is MPT51 antigen (mpt51) (Mycobacterium leprae (strain TN)).